Consider the following 152-residue polypeptide: Cell division protein SepF (152 aa).

Residues 25-54 (EEREPVQEEKGTKDKAAFQERPQTGKQNVV) are disordered. Residues 28 to 42 (EPVQEEKGTKDKAAF) are compositionally biased toward basic and acidic residues.

This sequence belongs to the SepF family. Homodimer. Interacts with FtsZ.

It localises to the cytoplasm. Functionally, cell division protein that is part of the divisome complex and is recruited early to the Z-ring. Probably stimulates Z-ring formation, perhaps through the cross-linking of FtsZ protofilaments. Its function overlaps with FtsA. The protein is Cell division protein SepF of Bacillus pumilus (strain SAFR-032).